The chain runs to 283 residues: S-adenosylmethionine mitochondrial carrier protein homolog (283 aa).

Solcar repeat units lie at residues 11–84 (LKFF…GKQF), 93–178 (DSPY…FKLQ), and 187–275 (STPF…TTRI). A run of 6 helical transmembrane segments spans residues 14 to 34 (FHAL…LFPI), 55 to 75 (GIYK…ALFF), 99 to 119 (MAAA…VEIA), 152 to 172 (RGFG…FPLW), 190 to 210 (FSVA…TTPL), and 248 to 268 (FAGF…FFGF).

It belongs to the mitochondrial carrier (TC 2.A.29) family.

It localises to the mitochondrion inner membrane. Functionally, mitochondrial solute carriers shuttle metabolites, nucleotides, and cofactors through the mitochondrial inner membrane. May mediate the transport of S-adenosylmethionine (SAM) into the mitochondria. The polypeptide is S-adenosylmethionine mitochondrial carrier protein homolog (Drosophila melanogaster (Fruit fly)).